Consider the following 338-residue polypeptide: 1-aminocyclopropane-1-carboxylate deaminase (338 aa).

K51 carries the N6-(pyridoxal phosphate)lysine modification. S78 functions as the Nucleophile in the catalytic mechanism.

This sequence belongs to the ACC deaminase/D-cysteine desulfhydrase family. As to quaternary structure, homotrimer. It depends on pyridoxal 5'-phosphate as a cofactor.

It catalyses the reaction 1-aminocyclopropane-1-carboxylate + H2O = 2-oxobutanoate + NH4(+). Catalyzes a cyclopropane ring-opening reaction, the irreversible conversion of 1-aminocyclopropane-1-carboxylate (ACC) to ammonia and alpha-ketobutyrate. Allows growth on ACC as a nitrogen source. In Acidovorax ebreus (strain TPSY) (Diaphorobacter sp. (strain TPSY)), this protein is 1-aminocyclopropane-1-carboxylate deaminase.